The following is a 163-amino-acid chain: 2-C-methyl-D-erythritol 2,4-cyclodiphosphate synthase (163 aa).

The a divalent metal cation site is built by Asp9 and His11. Residues 9-11 (DVH) and 36-37 (HS) each bind 4-CDP-2-C-methyl-D-erythritol 2-phosphate. An a divalent metal cation-binding site is contributed by His44. 4-CDP-2-C-methyl-D-erythritol 2-phosphate is bound by residues 58–60 (DIG), 63–67 (FPDDD), 134–137 (TTSE), Phe141, and Arg144.

It belongs to the IspF family. As to quaternary structure, homotrimer. A divalent metal cation is required as a cofactor.

It catalyses the reaction 4-CDP-2-C-methyl-D-erythritol 2-phosphate = 2-C-methyl-D-erythritol 2,4-cyclic diphosphate + CMP. Its pathway is isoprenoid biosynthesis; isopentenyl diphosphate biosynthesis via DXP pathway; isopentenyl diphosphate from 1-deoxy-D-xylulose 5-phosphate: step 4/6. Involved in the biosynthesis of isopentenyl diphosphate (IPP) and dimethylallyl diphosphate (DMAPP), two major building blocks of isoprenoid compounds. Catalyzes the conversion of 4-diphosphocytidyl-2-C-methyl-D-erythritol 2-phosphate (CDP-ME2P) to 2-C-methyl-D-erythritol 2,4-cyclodiphosphate (ME-CPP) with a corresponding release of cytidine 5-monophosphate (CMP). The sequence is that of 2-C-methyl-D-erythritol 2,4-cyclodiphosphate synthase from Halorhodospira halophila (strain DSM 244 / SL1) (Ectothiorhodospira halophila (strain DSM 244 / SL1)).